Here is a 216-residue protein sequence, read N- to C-terminus: MPIGVPKVPYRIPGDEEATWVDLYNVMYRERTLFLGQEIRCEITNHITGLMVYLSIEDGISDIFLFINSPGGWLISGMAIFDTMQTVTPDIYTICLGIAASMASFILLGGEPTKRIAFPHARIMLHQPASAYYRARTPEFLLEVEELHKVREMITRVYAVRTGKPFWVVSEDMERDVFMSADEAKAYGLVDIVGDEMIDKHCDTDPVWFPEMFKDW.

The Nucleophile role is filled by serine 101. Residue histidine 126 is part of the active site.

This sequence belongs to the peptidase S14 family. As to quaternary structure, component of the chloroplastic Clp protease core complex.

The protein resides in the plastid. It is found in the chloroplast stroma. It catalyses the reaction Hydrolysis of proteins to small peptides in the presence of ATP and magnesium. alpha-casein is the usual test substrate. In the absence of ATP, only oligopeptides shorter than five residues are hydrolyzed (such as succinyl-Leu-Tyr-|-NHMec, and Leu-Tyr-Leu-|-Tyr-Trp, in which cleavage of the -Tyr-|-Leu- and -Tyr-|-Trp bonds also occurs).. In terms of biological role, cleaves peptides in various proteins in a process that requires ATP hydrolysis. Has a chymotrypsin-like activity. Plays a major role in the degradation of misfolded proteins. The sequence is that of ATP-dependent Clp protease proteolytic subunit from Triticum aestivum (Wheat).